A 508-amino-acid chain; its full sequence is 3-octaprenyl-4-hydroxybenzoate carboxy-lyase (508 aa).

Asn-172 is a Mn(2+) binding site. Prenylated FMN contacts are provided by residues 175–177 (IYR), 189–191 (RWL), and 194–195 (RG). Glu-238 contacts Mn(2+). Asp-287 acts as the Proton donor in catalysis. The tract at residues 483-508 (GEYGIATPPPPPRHSPPSDERGHDDV) is disordered. The span at 498-508 (PPSDERGHDDV) shows a compositional bias: basic and acidic residues.

It belongs to the UbiD family. In terms of assembly, homohexamer. The cofactor is prenylated FMN. Requires Mn(2+) as cofactor.

Its subcellular location is the cell membrane. It carries out the reaction a 4-hydroxy-3-(all-trans-polyprenyl)benzoate + H(+) = a 2-(all-trans-polyprenyl)phenol + CO2. Its pathway is cofactor biosynthesis; ubiquinone biosynthesis. Catalyzes the decarboxylation of 3-octaprenyl-4-hydroxy benzoate to 2-octaprenylphenol, an intermediate step in ubiquinone biosynthesis. In Chromohalobacter salexigens (strain ATCC BAA-138 / DSM 3043 / CIP 106854 / NCIMB 13768 / 1H11), this protein is 3-octaprenyl-4-hydroxybenzoate carboxy-lyase.